The following is a 270-amino-acid chain: Non-homologous end joining protein Ku (270 aa).

Positions 10-194 constitute a Ku domain; sequence SLGLLNIGIK…NYPIQKQELT (185 aa).

It belongs to the prokaryotic Ku family. Homodimer. Interacts with LigD.

In terms of biological role, with LigD forms a non-homologous end joining (NHEJ) DNA repair enzyme, which repairs dsDNA breaks with reduced fidelity. Binds linear dsDNA with 5'- and 3'- overhangs but not closed circular dsDNA nor ssDNA. Recruits and stimulates the ligase activity of LigD. In Bacillus thuringiensis subsp. konkukian (strain 97-27), this protein is Non-homologous end joining protein Ku.